Reading from the N-terminus, the 383-residue chain is E3 ubiquitin-protein ligase SPL2 (383 aa).

The Cytoplasmic portion of the chain corresponds to 1-14 (MSSPERALLNLLTD). The helical transmembrane segment at 15-35 (IALSFDGAILGLTLAVSAVGS) threads the bilayer. The Chloroplast intermembrane portion of the chain corresponds to 36-269 (ALKYASTNAA…MIEDLMEQTN (234 aa)). A helical membrane pass occupies residues 270 to 290 (FIFLGSVILGIVSVGILSYAA). Over 291–383 (VRTWNKWKQW…IRGSMRVYYS (93 aa)) the chain is Cytoplasmic. The RING-type zinc-finger motif lies at 331–370 (CVICVSRRRVPAFIPCGHVVCCRRCASTVERELNPKCPVC).

The protein localises to the plastid. The protein resides in the chloroplast outer membrane. The catalysed reaction is S-ubiquitinyl-[E2 ubiquitin-conjugating enzyme]-L-cysteine + [acceptor protein]-L-lysine = [E2 ubiquitin-conjugating enzyme]-L-cysteine + N(6)-ubiquitinyl-[acceptor protein]-L-lysine.. Its pathway is protein modification; protein ubiquitination. Functionally, possesses E3 ubiquitin-protein ligase activity. The protein is E3 ubiquitin-protein ligase SPL2 of Arabidopsis thaliana (Mouse-ear cress).